The chain runs to 239 residues: Putative antitoxin VapB45 (239 aa).

Its function is as follows. Possibly the antitoxin component of a type II toxin-antitoxin (TA) system. Its cognate toxin is VapC45. This chain is Putative antitoxin VapB45, found in Mycobacterium tuberculosis (strain ATCC 25618 / H37Rv).